The following is an 871-amino-acid chain: Protein translocase subunit SecA (871 aa).

Residues Gln80, 98–102, and Asp537 each bind ATP; that span reads GEGKT. The segment at 852 to 871 is disordered; sequence MEKGKKKGGSHGLGKIRVKR. Positions 855–871 are enriched in basic residues; the sequence is GKKKGGSHGLGKIRVKR.

This sequence belongs to the SecA family. In terms of assembly, monomer and homodimer. Part of the essential Sec protein translocation apparatus which comprises SecA, SecYEG and auxiliary proteins SecDF. Other proteins may also be involved.

It is found in the cell inner membrane. The protein resides in the cytoplasm. The enzyme catalyses ATP + H2O + cellular proteinSide 1 = ADP + phosphate + cellular proteinSide 2.. Its function is as follows. Part of the Sec protein translocase complex. Interacts with the SecYEG preprotein conducting channel. Has a central role in coupling the hydrolysis of ATP to the transfer of proteins into and across the cell membrane, serving as an ATP-driven molecular motor driving the stepwise translocation of polypeptide chains across the membrane. This is Protein translocase subunit SecA from Thermotoga neapolitana (strain ATCC 49049 / DSM 4359 / NBRC 107923 / NS-E).